The sequence spans 588 residues: Calicin (588 aa).

A BTB domain is found at 28–98; the sequence is WDIALTVDHH…FYSGKVVISE (71 aa). The residue at position 149 (serine 149) is a Phosphoserine. Kelch repeat units follow at residues 280–327, 328–375, 377–423, 425–475, 476–525, and 526–580; these read SVVI…SAGR, YIYI…TCGG, VYSV…TRGD, NLYI…SFHQ, DNIL…VGDN, and KVFV…LAKL.

As to quaternary structure, interacts with CYLC1; the interaction may be relevant for proper acrosome attachment to the nuclear envelope. As to expression, expressed in testis and in spermatozoa (at protein level).

Its subcellular location is the cytoplasm. The protein resides in the cytoskeleton. It localises to the perinuclear theca. The protein localises to the calyx. Required for both nuclear and acrosomal shaping during spermiogenesis. The polypeptide is Calicin (CCIN) (Bos taurus (Bovine)).